The sequence spans 431 residues: tRNA(Ile)-lysidine synthase (431 aa).

Residue 25-30 (SGGLDS) coordinates ATP.

The protein belongs to the tRNA(Ile)-lysidine synthase family.

The protein resides in the cytoplasm. It catalyses the reaction cytidine(34) in tRNA(Ile2) + L-lysine + ATP = lysidine(34) in tRNA(Ile2) + AMP + diphosphate + H(+). In terms of biological role, ligates lysine onto the cytidine present at position 34 of the AUA codon-specific tRNA(Ile) that contains the anticodon CAU, in an ATP-dependent manner. Cytidine is converted to lysidine, thus changing the amino acid specificity of the tRNA from methionine to isoleucine. In Legionella pneumophila (strain Paris), this protein is tRNA(Ile)-lysidine synthase.